The chain runs to 502 residues: Probable glycine dehydrogenase (decarboxylating) subunit 2 (502 aa).

At Lys273 the chain carries N6-(pyridoxal phosphate)lysine.

This sequence belongs to the GcvP family. C-terminal subunit subfamily. As to quaternary structure, the glycine cleavage system is composed of four proteins: P, T, L and H. In this organism, the P 'protein' is a heterodimer of two subunits. It depends on pyridoxal 5'-phosphate as a cofactor.

The enzyme catalyses N(6)-[(R)-lipoyl]-L-lysyl-[glycine-cleavage complex H protein] + glycine + H(+) = N(6)-[(R)-S(8)-aminomethyldihydrolipoyl]-L-lysyl-[glycine-cleavage complex H protein] + CO2. Functionally, the glycine cleavage system catalyzes the degradation of glycine. The P protein binds the alpha-amino group of glycine through its pyridoxal phosphate cofactor; CO(2) is released and the remaining methylamine moiety is then transferred to the lipoamide cofactor of the H protein. The polypeptide is Probable glycine dehydrogenase (decarboxylating) subunit 2 (Thermococcus kodakarensis (strain ATCC BAA-918 / JCM 12380 / KOD1) (Pyrococcus kodakaraensis (strain KOD1))).